The chain runs to 328 residues: POU domain, class 5, transcription factor 2 (328 aa).

The interval M1–M25 is disordered. A POU-specific domain is found at D118–E192. The homeobox DNA-binding region spans G210–T269.

Belongs to the POU transcription factor family. Class-5 subfamily. Expressed in skeletal and cardiac muscles, brain, heart and lung. Little or no detectable expression found in pancreas, kidney, liver or placenta.

The protein resides in the nucleus. Transcription factor that binds preferentially to the octamer motif (5'-ATGTTAAT-3'). May exert a regulatory function in meiotic events that are required for terminal differentiation of male germ cell. The protein is POU domain, class 5, transcription factor 2 (POU5F2) of Homo sapiens (Human).